Reading from the N-terminus, the 86-residue chain is U18-theraphotoxin-Cg1a (86 aa).

A signal peptide spans 1-20 (KASVLITLAVLGVMFVWTSA). Residues 21 to 49 (AELEERGSDQRDSPALIKSMAKVFQSEER) constitute a propeptide that is removed on maturation. 3 disulfides stabilise this stretch: Cys51–Cys65, Cys58–Cys70, and Cys64–Cys78. Phenylalanine amide is present on Phe84.

It belongs to the neurotoxin 10 (Hwtx-1) family. 47 subfamily. Expressed by the venom gland.

The protein localises to the secreted. In terms of biological role, inhibits TTX-sensitive and TTX-insensitive sodium currents (IC(50) is 0.6 uM and 0.95 uM respectively) on rat dorsal root ganglion (DRG) neurons. Inhibits muscular subtypes sodium channels Nav1.4/SCN4A and Nav1.5/SCN5A transiently transfected in to HEK293 cells (IC(50) is 5.42 uM and 0.45 uM respectively). Also blocks Kv2.1/KCNB1 potassium channels expressed in X.laevis oocytes with an IC(50) of 604 nM. Injection of the toxin in mice was immediately followed by general ataxia, lack of response to stimuli and semiparalysis. This Chilobrachys guangxiensis (Chinese earth tiger tarantula) protein is U18-theraphotoxin-Cg1a.